The sequence spans 198 residues: dCTP deaminase (198 aa).

Residues 110 to 115 (RSSLAR), Asp-128, 136 to 138 (VLE), Tyr-171, Lys-178, and Gln-182 each bind dCTP. Glu-138 functions as the Proton donor/acceptor in the catalytic mechanism. The disordered stretch occupies residues 168–198 (ARPYNKREDAKYRDQKGAVASRISQDEKVNK). Residues 172 to 183 (NKREDAKYRDQK) are compositionally biased toward basic and acidic residues.

It belongs to the dCTP deaminase family. As to quaternary structure, homotrimer.

It catalyses the reaction dCTP + H2O + H(+) = dUTP + NH4(+). It functions in the pathway pyrimidine metabolism; dUMP biosynthesis; dUMP from dCTP (dUTP route): step 1/2. Functionally, catalyzes the deamination of dCTP to dUTP. The protein is dCTP deaminase of Colwellia psychrerythraea (strain 34H / ATCC BAA-681) (Vibrio psychroerythus).